The chain runs to 228 residues: MATWANLGLQNSSSPLMEQLNFFHDHTLLILIMITVMIAYIMFMLFFNKFTNRYLLHGQTIEIIWTILPAIILMFIAFPSLRLLYLMDEINSPLITLKVIGHQWYWSYEYSNFLNLEFDSYMIPTNELDLNGFRLLDVDNRIILPMNNQIRILVTATDVLHSWTVPSLGVKIDATPGRLNQTNFLINQPGLFFGQCSEICGANHSFMPIVVESIPMNYFIKWISSQMN.

Topologically, residues 1–26 (MATWANLGLQNSSSPLMEQLNFFHDH) are mitochondrial intermembrane. A helical membrane pass occupies residues 27 to 48 (TLLILIMITVMIAYIMFMLFFN). Topologically, residues 49 to 62 (KFTNRYLLHGQTIE) are mitochondrial matrix. A helical membrane pass occupies residues 63–82 (IIWTILPAIILMFIAFPSLR). Residues 83 to 228 (LLYLMDEINS…FIKWISSQMN (146 aa)) are Mitochondrial intermembrane-facing. Cu cation contacts are provided by His161, Cys196, Glu198, Cys200, His204, and Met207. Residue Glu198 coordinates Mg(2+).

It belongs to the cytochrome c oxidase subunit 2 family. As to quaternary structure, component of the cytochrome c oxidase (complex IV, CIV), a multisubunit enzyme composed of a catalytic core of 3 subunits and several supernumerary subunits. The complex exists as a monomer or a dimer and forms supercomplexes (SCs) in the inner mitochondrial membrane with ubiquinol-cytochrome c oxidoreductase (cytochrome b-c1 complex, complex III, CIII). Requires Cu cation as cofactor.

The protein resides in the mitochondrion inner membrane. The catalysed reaction is 4 Fe(II)-[cytochrome c] + O2 + 8 H(+)(in) = 4 Fe(III)-[cytochrome c] + 2 H2O + 4 H(+)(out). Its function is as follows. Component of the cytochrome c oxidase, the last enzyme in the mitochondrial electron transport chain which drives oxidative phosphorylation. The respiratory chain contains 3 multisubunit complexes succinate dehydrogenase (complex II, CII), ubiquinol-cytochrome c oxidoreductase (cytochrome b-c1 complex, complex III, CIII) and cytochrome c oxidase (complex IV, CIV), that cooperate to transfer electrons derived from NADH and succinate to molecular oxygen, creating an electrochemical gradient over the inner membrane that drives transmembrane transport and the ATP synthase. Cytochrome c oxidase is the component of the respiratory chain that catalyzes the reduction of oxygen to water. Electrons originating from reduced cytochrome c in the intermembrane space (IMS) are transferred via the dinuclear copper A center (CU(A)) of subunit 2 and heme A of subunit 1 to the active site in subunit 1, a binuclear center (BNC) formed by heme A3 and copper B (CU(B)). The BNC reduces molecular oxygen to 2 water molecules using 4 electrons from cytochrome c in the IMS and 4 protons from the mitochondrial matrix. In Aedes aegypti (Yellowfever mosquito), this protein is Cytochrome c oxidase subunit 2 (COII).